The sequence spans 232 residues: Phosphatidylserine decarboxylase proenzyme (232 aa).

S190 acts as the Schiff-base intermediate with substrate; via pyruvic acid in catalysis. S190 is modified (pyruvic acid (Ser); by autocatalysis).

It belongs to the phosphatidylserine decarboxylase family. PSD-A subfamily. In terms of assembly, heterodimer of a large membrane-associated beta subunit and a small pyruvoyl-containing alpha subunit. Pyruvate is required as a cofactor. In terms of processing, is synthesized initially as an inactive proenzyme. Formation of the active enzyme involves a self-maturation process in which the active site pyruvoyl group is generated from an internal serine residue via an autocatalytic post-translational modification. Two non-identical subunits are generated from the proenzyme in this reaction, and the pyruvate is formed at the N-terminus of the alpha chain, which is derived from the carboxyl end of the proenzyme. The post-translation cleavage follows an unusual pathway, termed non-hydrolytic serinolysis, in which the side chain hydroxyl group of the serine supplies its oxygen atom to form the C-terminus of the beta chain, while the remainder of the serine residue undergoes an oxidative deamination to produce ammonia and the pyruvoyl prosthetic group on the alpha chain.

The protein resides in the cell membrane. The enzyme catalyses a 1,2-diacyl-sn-glycero-3-phospho-L-serine + H(+) = a 1,2-diacyl-sn-glycero-3-phosphoethanolamine + CO2. It participates in phospholipid metabolism; phosphatidylethanolamine biosynthesis; phosphatidylethanolamine from CDP-diacylglycerol: step 2/2. Functionally, catalyzes the formation of phosphatidylethanolamine (PtdEtn) from phosphatidylserine (PtdSer). Important for establishment of root nodule symbiosis with the host plant. This is Phosphatidylserine decarboxylase proenzyme from Rhizobium meliloti (strain 1021) (Ensifer meliloti).